The following is a 327-amino-acid chain: GTPase Obg (327 aa).

Residues 2 to 160 (HLFKDSLNLI…LNLRLELSLI (159 aa)) form the Obg domain. Positions 161–326 (ADVGLVGLPN…LVSEFFSLAK (166 aa)) constitute an OBG-type G domain. Residues 167 to 174 (GLPNAGKS), 192 to 196 (FTTKI), 213 to 216 (DLPG), 280 to 283 (SKLD), and 307 to 309 (SIY) each bind GTP. The Mg(2+) site is built by serine 174 and threonine 194.

The protein belongs to the TRAFAC class OBG-HflX-like GTPase superfamily. OBG GTPase family. Monomer. Requires Mg(2+) as cofactor.

It is found in the cytoplasm. Its function is as follows. An essential GTPase which binds GTP, GDP and possibly (p)ppGpp with moderate affinity, with high nucleotide exchange rates and a fairly low GTP hydrolysis rate. Plays a role in control of the cell cycle, stress response, ribosome biogenesis and in those bacteria that undergo differentiation, in morphogenesis control. The sequence is that of GTPase Obg from Borrelia recurrentis (strain A1).